The following is a 376-amino-acid chain: MSQAELNGELFTLERFPPNAEEEALQAWEAADEYLLQQVNDVDGLTLIFNDGFGALACALAERNPVSINDSFISELATRHNLRMNGIDEESVRFQDSLSPLPAAPALVLIKVPKQLALLEQQLRALREVVTPETRIIAAAKARDVHNSTLALFEKILGTTTTSLAWKKARLIHCVFTAPELADAPQTYSWKLDGTPWTIHNHANVFARSGLDIGARFFLQHLPSDLEGEIADLGCGNGVIGLQALAQNPNARVMFTDESHMAVASSRLNVERNLPDDIARCEFMVNNSLSGIEPDRFTAILCNPPFHQQHAITDHIAWQMFNDARRSLKYGGELYVVGNRHLDYFRKLKRAFGNCTTIATNNKFVILKATKVRKQR.

Belongs to the methyltransferase superfamily. RlmG family.

The protein resides in the cytoplasm. It catalyses the reaction guanosine(1835) in 23S rRNA + S-adenosyl-L-methionine = N(2)-methylguanosine(1835) in 23S rRNA + S-adenosyl-L-homocysteine + H(+). In terms of biological role, specifically methylates the guanine in position 1835 (m2G1835) of 23S rRNA. In Klebsiella pneumoniae subsp. pneumoniae (strain ATCC 700721 / MGH 78578), this protein is Ribosomal RNA large subunit methyltransferase G.